The sequence spans 529 residues: Type I restriction enzyme StySJI methylase subunit (529 aa).

Residues 148–153 (QYFTPR), 178–180 (TAG), and Glu216 contribute to the S-adenosyl-L-methionine site. The tract at residues 405–444 (YGEDPHGLSPREEGEWSFNAEESEVADSEENKNTDQHQAT) is disordered. Basic and acidic residues predominate over residues 407–418 (EDPHGLSPREEG).

Belongs to the N(4)/N(6)-methyltransferase family. The type I restriction/modification system is composed of three polypeptides R, M and S; the restriction enzyme has stoichiometry R(2)M(2)S(1) while the methyltransferase is M(2)S(1).

The enzyme catalyses a 2'-deoxyadenosine in DNA + S-adenosyl-L-methionine = an N(6)-methyl-2'-deoxyadenosine in DNA + S-adenosyl-L-homocysteine + H(+). In terms of biological role, the subtype gamma methyltransferase (M) subunit of a type I restriction enzyme. The M and S subunits together form a methyltransferase (MTase) that methylates two adenine residues of the sequence 5'-GAGN(6)GTRC-3'. In the presence of the R subunit the complex can also act as an endonuclease, binding to the same target sequence but cutting the DNA some distance from this site. Whether the DNA is cut or modified depends on the methylation state of the target sequence. When the target site is unmodified, the DNA is cut. When the target site is hemimethylated, the complex acts as a maintenance MTase modifying the DNA so that both strands become methylated. After locating a non-methylated recognition site, the enzyme complex serves as a molecular motor that translocates DNA in an ATP-dependent manner until a collision occurs that triggers cleavage. In Salmonella typhimurium (strain LT2 / SGSC1412 / ATCC 700720), this protein is Type I restriction enzyme StySJI methylase subunit.